The following is a 741-amino-acid chain: Oosporein cluster regulator OpS3 (741 aa).

Residues Gly16 to Gln39 are disordered. Residues Arg20–Ser34 show a composition bias toward low complexity. A DNA-binding region (zn(2)-C6 fungal-type) is located at residues Cys44–Cys69. Residues His139–Ala167 form a disordered region. The stretch at Thr473 to Leu500 forms a coiled coil. A disordered region spans residues Thr501 to Asn528. The span at Arg506 to Asn528 shows a compositional bias: polar residues.

The protein resides in the nucleus. Transcription factor involved in regulation of gene cluster that mediates the biosynthesis of oosporein, a metabolite required for fungal virulence that acts by evading host immunity to facilitate fungal multiplication in insects. Binds oosporein cluster genes at a conserved 5'-CGGA-3' motif with the exception of OpS5. The presence of this motif in the OpS3 promoter would suggest the formation of a positive feedback loop for self-activation. The protein is Oosporein cluster regulator OpS3 of Beauveria bassiana (strain ARSEF 2860) (White muscardine disease fungus).